A 158-amino-acid polypeptide reads, in one-letter code: Endoribonuclease YbeY (158 aa).

His-118, His-122, and His-128 together coordinate Zn(2+).

Belongs to the endoribonuclease YbeY family. It depends on Zn(2+) as a cofactor.

It is found in the cytoplasm. Single strand-specific metallo-endoribonuclease involved in late-stage 70S ribosome quality control and in maturation of the 3' terminus of the 16S rRNA. The chain is Endoribonuclease YbeY from Bartonella henselae (strain ATCC 49882 / DSM 28221 / CCUG 30454 / Houston 1) (Rochalimaea henselae).